The chain runs to 194 residues: MIFLPTVIDKNIKGDRFLDLYSKMLKERVIYLNGAIEDTMASLIVSQLMFLDSENSKDIILYINSPGGVVSSGLSIYDTIQFLKSDVSTICIGQAASMAAVLLAAGKKGKRFCFPNSRIMIHQPLGYAQGQASDVEIHAREMINIKQILCEILSSHTNNSIFQIFKDTDRDNFMNCKQTLKYGIIDNVLYKKWI.

Serine 97 serves as the catalytic Nucleophile. Histidine 122 is an active-site residue.

Belongs to the peptidase S14 family. As to quaternary structure, fourteen ClpP subunits assemble into 2 heptameric rings which stack back to back to give a disk-like structure with a central cavity, resembling the structure of eukaryotic proteasomes.

Its subcellular location is the cytoplasm. It catalyses the reaction Hydrolysis of proteins to small peptides in the presence of ATP and magnesium. alpha-casein is the usual test substrate. In the absence of ATP, only oligopeptides shorter than five residues are hydrolyzed (such as succinyl-Leu-Tyr-|-NHMec, and Leu-Tyr-Leu-|-Tyr-Trp, in which cleavage of the -Tyr-|-Leu- and -Tyr-|-Trp bonds also occurs).. In terms of biological role, cleaves peptides in various proteins in a process that requires ATP hydrolysis. Has a chymotrypsin-like activity. Plays a major role in the degradation of misfolded proteins. This Carsonella ruddii (strain PV) protein is ATP-dependent Clp protease proteolytic subunit.